Here is a 245-residue protein sequence, read N- to C-terminus: Gem-associated protein 2 (245 aa).

The protein belongs to the gemin-2 family. In terms of assembly, component of the core survival motor neuron (SMN) complex composed of Smn, Gem2, Gem3, rig/Gem5 and one of 3 almost identical Gem4 paralogs encoded by Glos/Gem4a, Gem4b or Gem4c. Part of a minimal SMN complex composed of Smn and Gem2 only; this complex is active in UsnRNP assembly. The SMN complex associates with the entire set of spliceosomal snRNP Sm proteins, SmB, SmD1, SmD2, SmD3, SmE, SmF and SmG, and with the snRNP-specific proteins snRNP-U1-70K, U2A, snf/U1A and U5-116KD. Expressed in nurse cells and oocytes.

The protein localises to the cytoplasm. Its subcellular location is the U-body. Its function is as follows. Component of the survival motor neuron (SMN) complex that catalyzes the assembly of small nuclear ribonucleoproteins (snRNPs), the building blocks of the spliceosome, and thereby plays an important role in the splicing of cellular pre-mRNAs. Most spliceosomal snRNPs contain a common set of Sm proteins SNRPB, SNRPD1, SNRPD2, SNRPD3, SNRPE, SNRPF and SNRPG that assemble in a heptameric protein ring on the Sm site of the small nuclear RNA to form the core snRNP (Sm core). In the cytosol, the Sm proteins SNRPD1, SNRPD2, SNRPE, SNRPF and SNRPG (5Sm) are trapped in an inactive 6S pICln-Sm complex by the chaperone CLNS1A that controls the assembly of the core snRNP. To assemble core snRNPs, the SMN complex accepts the trapped 5Sm proteins from CLNS1A. Binding of snRNA inside 5Sm ultimately triggers eviction of the SMN complex, thereby allowing binding of SNRPD3 and SNRPB to complete assembly of the core snRNP. Within the SMN complex, GEMIN2 constrains the conformation of 5Sm, thereby promoting 5Sm binding to snRNA containing the snRNP code (a nonameric Sm site and a 3'-adjacent stem-loop), thus preventing progression of assembly until a cognate substrate is bound. Involved in adult motor function. The chain is Gem-associated protein 2 from Drosophila melanogaster (Fruit fly).